Reading from the N-terminus, the 146-residue chain is Interleukin-13 (146 aa).

The signal sequence occupies residues 1–24 (MHPLLNPLLLALGLMALLLTTVIA). N-linked (GlcNAc...) asparagine glycosylation is found at asparagine 52, asparagine 63, asparagine 71, and asparagine 86. 2 cysteine pairs are disulfide-bonded: cysteine 62–cysteine 90 and cysteine 78–cysteine 104.

Belongs to the IL-4/IL-13 family. Interacts with IL13RA2.

The protein localises to the secreted. Its function is as follows. Cytokine that plays important roles in allergic inflammation and immune response to parasite infection. Synergizes with IL2 in regulating interferon-gamma synthesis. Stimulates B-cell proliferation, and activation of eosinophils, basophils, and mast cells. Plays an important role in controlling IL33 activity by modulating the production of transmembrane and soluble forms of interleukin-1 receptor-like 1/IL1RL1. Displays the capacity to antagonize Th1-driven proinflammatory immune response and downregulates synthesis of many proinflammatory cytokines including IL1, IL6, IL10, IL12 and TNF-alpha through a mechanism that partially involves suppression of NF-kappa-B. Also functions on nonhematopoietic cells, including endothelial cells where it induces vascular cell adhesion protein 1/VCAM1, which is important in the recruitment of eosinophils. Exerts its biological effects through its receptors which comprises the IL4R chain and the IL13RA1 chain, to activate JAK1 and TYK2, leading to the activation of STAT6. Aside from IL13RA1, another receptor IL13RA2 acts as a high affinity decoy for IL13 and mediates internalization and depletion of extracellular IL13. This is Interleukin-13 (IL13) from Homo sapiens (Human).